A 760-amino-acid polypeptide reads, in one-letter code: 5-methyltetrahydropteroyltriglutamate--homocysteine methyltransferase (760 aa).

Residues 17 to 20 and lysine 118 each bind 5-methyltetrahydropteroyltri-L-glutamate; that span reads RELK. L-homocysteine-binding positions include 436–438 and glutamate 489; that span reads IGS. Residues 436–438 and glutamate 489 contribute to the L-methionine site; that span reads IGS. 5-methyltetrahydropteroyltri-L-glutamate contacts are provided by residues 520-521 and tryptophan 566; that span reads RC. Aspartate 604 provides a ligand contact to L-homocysteine. Aspartate 604 provides a ligand contact to L-methionine. Residue glutamate 610 participates in 5-methyltetrahydropteroyltri-L-glutamate binding. 3 residues coordinate Zn(2+): histidine 646, cysteine 648, and glutamate 670. Histidine 699 acts as the Proton donor in catalysis. Cysteine 731 serves as a coordination point for Zn(2+).

Belongs to the vitamin-B12 independent methionine synthase family. The cofactor is Zn(2+).

It carries out the reaction 5-methyltetrahydropteroyltri-L-glutamate + L-homocysteine = tetrahydropteroyltri-L-glutamate + L-methionine. It functions in the pathway amino-acid biosynthesis; L-methionine biosynthesis via de novo pathway; L-methionine from L-homocysteine (MetE route): step 1/1. Functionally, catalyzes the transfer of a methyl group from 5-methyltetrahydrofolate to homocysteine resulting in methionine formation. This Vibrio parahaemolyticus serotype O3:K6 (strain RIMD 2210633) protein is 5-methyltetrahydropteroyltriglutamate--homocysteine methyltransferase.